A 144-amino-acid polypeptide reads, in one-letter code: Ig heavy chain V region MOPC 141 (144 aa).

The N-terminal stretch at 1 to 19 is a signal peptide; the sequence is MAVLALLFCLATFPSCILS. The region spanning 20-130 is the Ig-like domain; that stretch reads QVQLKESGPG…YYGRSDKYFT (111 aa).

This is Ig heavy chain V region MOPC 141 from Mus musculus (Mouse).